The primary structure comprises 631 residues: Phosphomethylpyrimidine synthase (631 aa).

Residues N239, M268, Y297, H333, 353–355 (SRG), 394–397 (DGLR), and E433 contribute to the substrate site. Zn(2+) is bound at residue H437. Substrate is bound at residue Y460. H501 is a Zn(2+) binding site. [4Fe-4S] cluster contacts are provided by C581, C584, and C589.

This sequence belongs to the ThiC family. In terms of assembly, homodimer. It depends on [4Fe-4S] cluster as a cofactor.

It carries out the reaction 5-amino-1-(5-phospho-beta-D-ribosyl)imidazole + S-adenosyl-L-methionine = 4-amino-2-methyl-5-(phosphooxymethyl)pyrimidine + CO + 5'-deoxyadenosine + formate + L-methionine + 3 H(+). It participates in cofactor biosynthesis; thiamine diphosphate biosynthesis. Its function is as follows. Catalyzes the synthesis of the hydroxymethylpyrimidine phosphate (HMP-P) moiety of thiamine from aminoimidazole ribotide (AIR) in a radical S-adenosyl-L-methionine (SAM)-dependent reaction. In Escherichia coli O6:K15:H31 (strain 536 / UPEC), this protein is Phosphomethylpyrimidine synthase.